The primary structure comprises 43 residues: Protein PsbN (43 aa).

Residues 5–27 form a helical membrane-spanning segment; it reads TLVAIPISCLLVSFTGYALYTAF.

It belongs to the PsbN family.

The protein resides in the plastid. It is found in the chloroplast thylakoid membrane. In terms of biological role, may play a role in photosystem I and II biogenesis. This Sphagnum cuspidatum (Bog moss) protein is Protein PsbN.